Here is a 509-residue protein sequence, read N- to C-terminus: 5-OH-xanthotoxin synthase (509 aa).

A helical transmembrane segment spans residues 5–25; the sequence is AVVILLILAFPIASVYVLFYH. The segment at 368-373 is substrate specificity; it reads TGALLI. Cys-449 contacts heme.

The protein belongs to the cytochrome P450 family. Requires heme as cofactor.

It localises to the microsome membrane. The catalysed reaction is xanthotoxin + reduced [NADPH--hemoprotein reductase] + O2 = 5-hydroxyxanthotoxin + oxidized [NADPH--hemoprotein reductase] + H2O + 2 H(+). It participates in secondary metabolite biosynthesis. In terms of biological role, involved in the biosynthesis of coumarins and furanocoumarins (FCs), natural products required for defense responses against attacks by predators with potential medical and agroindustrial usages such as anticoagulant, rodenticide and artificial vanilla substitutes. Catalyzes the conversion of xanthotoxin into 5-hydroxyxanthotoxin. The protein is 5-OH-xanthotoxin synthase of Ammi majus (Bishop's weed).